Reading from the N-terminus, the 259-residue chain is Small ribosomal subunit protein eS1 (259 aa).

N-acetylalanine; partial is present on Ala-2.

The protein belongs to the eukaryotic ribosomal protein eS1 family. As to quaternary structure, component of the small ribosomal subunit. Mature ribosomes consist of a small (40S) and a large (60S) subunit. The 40S subunit contains about 33 different proteins and 1 molecule of RNA (18S). The 60S subunit contains about 49 different proteins and 3 molecules of RNA (25S, 5.8S and 5S).

It is found in the cytoplasm. The chain is Small ribosomal subunit protein eS1 from Cryptococcus neoformans var. neoformans serotype D (strain B-3501A) (Filobasidiella neoformans).